Reading from the N-terminus, the 229-residue chain is Clathrin light chain B (229 aa).

Low complexity-rich tracts occupy residues 1–17 and 45–58; these read MAED…GAPE and GAPA…AQPG. The segment at 1 to 80 is disordered; sequence MAEDFGFFSS…TVNGDVFQEA (80 aa). S11 and S13 each carry phosphoserine. Positions 93 to 155 are involved in binding clathrin heavy chain; the sequence is ADRLTQEPES…QVEKNKINNR (63 aa). T187 is modified (phosphothreonine). C199 and C209 form a disulfide bridge. At K204 the chain carries N6-acetyllysine. Phosphoserine is present on S217.

It belongs to the clathrin light chain family. Clathrin coats are formed from molecules containing 3 heavy chains and 3 light chains. Interacts (via N-terminus) with HIP1. Interacts with HIP1R.

It is found in the cytoplasmic vesicle membrane. Its subcellular location is the membrane. The protein resides in the coated pit. In terms of biological role, clathrin is the major protein of the polyhedral coat of coated pits and vesicles. The chain is Clathrin light chain B (Cltb) from Rattus norvegicus (Rat).